The chain runs to 159 residues: NADH-quinone oxidoreductase subunit I (159 aa).

2 4Fe-4S ferredoxin-type domains span residues arginine 51 to aspartate 80 and threonine 90 to asparagine 119. [4Fe-4S] cluster-binding residues include cysteine 60, cysteine 63, cysteine 66, cysteine 70, cysteine 99, cysteine 102, cysteine 105, and cysteine 109.

Belongs to the complex I 23 kDa subunit family. As to quaternary structure, NDH-1 is composed of 14 different subunits. Subunits NuoA, H, J, K, L, M, N constitute the membrane sector of the complex. [4Fe-4S] cluster serves as cofactor.

The protein resides in the cell inner membrane. It carries out the reaction a quinone + NADH + 5 H(+)(in) = a quinol + NAD(+) + 4 H(+)(out). In terms of biological role, NDH-1 shuttles electrons from NADH, via FMN and iron-sulfur (Fe-S) centers, to quinones in the respiratory chain. The immediate electron acceptor for the enzyme in this species is believed to be ubiquinone. Couples the redox reaction to proton translocation (for every two electrons transferred, four hydrogen ions are translocated across the cytoplasmic membrane), and thus conserves the redox energy in a proton gradient. This chain is NADH-quinone oxidoreductase subunit I, found in Rickettsia akari (strain Hartford).